We begin with the raw amino-acid sequence, 274 residues long: RNA polymerase sigma factor SigI4 (274 aa).

Positions 87–100 (EEYSVGLMAFNEAI) match the Polymerase core binding motif. Positions 226–245 (LSELMGLVNVHRKTVERNRK) form a DNA-binding region, H-T-H motif.

This sequence belongs to the sigma-70 factor family. SigI subfamily. As to quaternary structure, interacts with RsgI4.

It localises to the cytoplasm. With respect to regulation, negatively regulated by the anti-sigma-I factor RsgI4. Binding of the polysaccharide substrate to RsgI4 may lead to the release and activation of SigI4. Sigma factors are initiation factors that promote the attachment of RNA polymerase to specific initiation sites and are then released. This sigma factor is involved in regulation of cellulosomal genes via an external polysaccharide-sensing mechanism. The polypeptide is RNA polymerase sigma factor SigI4 (Acetivibrio thermocellus (strain ATCC 27405 / DSM 1237 / JCM 9322 / NBRC 103400 / NCIMB 10682 / NRRL B-4536 / VPI 7372) (Clostridium thermocellum)).